We begin with the raw amino-acid sequence, 290 residues long: 4-hydroxybenzoate octaprenyltransferase (290 aa).

8 helical membrane-spanning segments follow: residues 23 to 43 (IGAL…TPGM), 46 to 66 (LWIL…GCVV), 99 to 119 (LFVV…AMTI), 141 to 161 (LPQV…FAAV), 163 to 183 (ESLP…AVAY), 212 to 232 (TLII…IGWL), 233 to 253 (NGLG…FVYQ), and 268 to 288 (AFMN…MSYW).

This sequence belongs to the UbiA prenyltransferase family. The cofactor is Mg(2+).

Its subcellular location is the cell inner membrane. The catalysed reaction is all-trans-octaprenyl diphosphate + 4-hydroxybenzoate = 4-hydroxy-3-(all-trans-octaprenyl)benzoate + diphosphate. It participates in cofactor biosynthesis; ubiquinone biosynthesis. Catalyzes the prenylation of para-hydroxybenzoate (PHB) with an all-trans polyprenyl group. Mediates the second step in the final reaction sequence of ubiquinone-8 (UQ-8) biosynthesis, which is the condensation of the polyisoprenoid side chain with PHB, generating the first membrane-bound Q intermediate 3-octaprenyl-4-hydroxybenzoate. This is 4-hydroxybenzoate octaprenyltransferase from Salmonella paratyphi C (strain RKS4594).